Consider the following 285-residue polypeptide: MVKDTTHSILEISTIHGKSSVTGSKIFRPLKIFALEKNKACHLVFSNYGGGFVEGDSIDLTIDCKADTVSAFSSQANTRIYRSEHGKTCKQTITGTVGENALVVFMGDPVVPHQKSIFEQHLFWKLEKNAVLLVIDWFEAGRILNGERFAFDSFFTELKIESNGVPIVWDRFKMDPSQNNMNSPGAFLDHSSYINIFLAGDENLTRVKSIETQLRFLAAQYFHEHIENKSESLIRIGSAVKVNEQVFMIRCSAKNNDLLQPFVKALAEHMSDKELLGFNPFEGRN.

This sequence belongs to the UreD family. In terms of assembly, ureD, UreF and UreG form a complex that acts as a GTP-hydrolysis-dependent molecular chaperone, activating the urease apoprotein by helping to assemble the nickel containing metallocenter of UreC. The UreE protein probably delivers the nickel.

Its subcellular location is the cytoplasm. Functionally, required for maturation of urease via the functional incorporation of the urease nickel metallocenter. The polypeptide is Urease accessory protein UreD (Cytophaga hutchinsonii (strain ATCC 33406 / DSM 1761 / CIP 103989 / NBRC 15051 / NCIMB 9469 / D465)).